The primary structure comprises 547 residues: Chaperonin GroEL (547 aa).

ATP contacts are provided by residues 30 to 33 (TLGP), Lys-51, 87 to 91 (DGTTT), Gly-415, 479 to 481 (NAA), and Asp-495.

This sequence belongs to the chaperonin (HSP60) family. In terms of assembly, forms a cylinder of 14 subunits composed of two heptameric rings stacked back-to-back. Interacts with the co-chaperonin GroES.

The protein resides in the cytoplasm. The enzyme catalyses ATP + H2O + a folded polypeptide = ADP + phosphate + an unfolded polypeptide.. In terms of biological role, together with its co-chaperonin GroES, plays an essential role in assisting protein folding. The GroEL-GroES system forms a nano-cage that allows encapsulation of the non-native substrate proteins and provides a physical environment optimized to promote and accelerate protein folding. This is Chaperonin GroEL from Pseudomonas putida (strain GB-1).